The following is a 384-amino-acid chain: Deoxyguanosinetriphosphate triphosphohydrolase-like protein (384 aa).

The HD domain maps to 62–198 (RLTHSLEVST…AALADDISYI (137 aa)).

Belongs to the dGTPase family. Type 2 subfamily.

This is Deoxyguanosinetriphosphate triphosphohydrolase-like protein from Rickettsia rickettsii (strain Iowa).